A 580-amino-acid chain; its full sequence is Mitogen-activated protein kinase 12 (580 aa).

A disordered region spans residues 18-38; sequence RTASGSNQSSNAGEEAASSDL. Residues 20 to 29 are compositionally biased toward polar residues; sequence ASGSNQSSNA. The 292-residue stretch at 87–378 folds into the Protein kinase domain; it reads YQIQEVIGKG…AEEALADPYF (292 aa). Residues 93-101 and lysine 116 contribute to the ATP site; that span reads IGKGSYGVV. Aspartate 213 acts as the Proton acceptor in catalysis. Threonine 249 is subject to Phosphothreonine. Residues 249–251 carry the TXY motif; the sequence is TDY. Position 251 is a phosphotyrosine (tyrosine 251). The required for kinase activity and nuclear localization stretch occupies residues 325 to 506; the sequence is ARRYLSTMRK…SADSVARTTV (182 aa). The segment at 458–580 is disordered; that stretch reads YSKGERGSPL…LSEQVSRMHS (123 aa). A compositionally biased stretch (polar residues) spans 502–543; sequence ARTTVSPPMSQDAQQHGSAGQNGVTSTDLSSRSYLKSASISA. Residues 554–566 show a composition bias toward acidic residues; sequence EPEDDYISEEMEG.

The protein belongs to the protein kinase superfamily. CMGC Ser/Thr protein kinase family. MAP kinase subfamily. Interacts with EREBP1. In terms of processing, dually phosphorylated on Thr-249 and Tyr-251, which activates the enzyme. Phosphorylated on tyrosine residue.

Its subcellular location is the cytoplasm. It localises to the nucleus. The enzyme catalyses L-seryl-[protein] + ATP = O-phospho-L-seryl-[protein] + ADP + H(+). It catalyses the reaction L-threonyl-[protein] + ATP = O-phospho-L-threonyl-[protein] + ADP + H(+). Its activity is regulated as follows. Activated by threonine and tyrosine phosphorylation. Activated in response to hydrogen peroxide, salicylic acid, jasmonic acid, ethylene, fungal elicitor and infection with rice blast fungus (M.grisea). Functionally, may be involved in defense signaling pathway. Phosphorylates EREBP1 transcriptional activator in vitro. Enhances DNA-binding activity of EREBP1 to the GCC box element of pathogenesis-related (PR) gene promoters. The chain is Mitogen-activated protein kinase 12 (MPK12) from Oryza sativa subsp. japonica (Rice).